The sequence spans 320 residues: Malate dehydrogenase (320 aa).

NAD(+) is bound by residues 10 to 15 and Asp34; that span reads GAGQIG. Residues Arg83 and Arg89 each contribute to the substrate site. NAD(+) is bound by residues Asn96 and 119-121; that span reads ITN. Positions 121 and 152 each coordinate substrate. Residue His176 is the Proton acceptor of the active site.

Belongs to the LDH/MDH superfamily. MDH type 3 family.

It catalyses the reaction (S)-malate + NAD(+) = oxaloacetate + NADH + H(+). Catalyzes the reversible oxidation of malate to oxaloacetate. In Methylorubrum extorquens (strain CM4 / NCIMB 13688) (Methylobacterium extorquens), this protein is Malate dehydrogenase.